A 281-amino-acid polypeptide reads, in one-letter code: Polyamine aminopropyltransferase (281 aa).

A PABS domain is found at 2 to 237 (EIWYTEKLEL…GIIGFTFLSN (236 aa)). Q33 is an S-methyl-5'-thioadenosine binding site. Spermidine-binding residues include H64 and D88. S-methyl-5'-thioadenosine-binding positions include E108 and 139–140 (DG). Catalysis depends on D157, which acts as the Proton acceptor. Residue 157-160 (DSSD) coordinates spermidine. An S-methyl-5'-thioadenosine-binding site is contributed by P164.

It belongs to the spermidine/spermine synthase family. In terms of assembly, homodimer or homotetramer.

It is found in the cytoplasm. It catalyses the reaction S-adenosyl 3-(methylsulfanyl)propylamine + putrescine = S-methyl-5'-thioadenosine + spermidine + H(+). It participates in amine and polyamine biosynthesis; spermidine biosynthesis; spermidine from putrescine: step 1/1. Catalyzes the irreversible transfer of a propylamine group from the amino donor S-adenosylmethioninamine (decarboxy-AdoMet) to putrescine (1,4-diaminobutane) to yield spermidine. The sequence is that of Polyamine aminopropyltransferase from Leptospira biflexa serovar Patoc (strain Patoc 1 / Ames).